Consider the following 293-residue polypeptide: Probable xyloglucan endotransglucosylase/hydrolase protein B (293 aa).

An N-terminal signal peptide occupies residues 1–21 (MASSLLILCLVLVSLASSALC). One can recognise a GH16 domain in the interval 23–220 (APRRPVDVPF…WSKAPFVAEY (198 aa)). Glu106 acts as the Nucleophile in catalysis. Glu110 serves as the catalytic Proton donor. A xyloglucan-binding site is contributed by Glu110. Asn114 carries N-linked (GlcNAc...) asparagine glycosylation. Residues 123-125 (QTN), 133-135 (DRE), 199-200 (DW), and Gly204 each bind xyloglucan. 2 cysteine pairs are disulfide-bonded: Cys228/Cys237 and Cys274/Cys287. Arg279 contacts xyloglucan.

Belongs to the glycosyl hydrolase 16 family. XTH group 1 subfamily. Post-translationally, contains at least one intrachain disulfide bond essential for its enzymatic activity. Predominantly expressed in the phloem fibers of growing internodes. Weakly or not expressed in the xylem. In the internode, it is expressed closer to the bottom of the internode compared to XTHA.

It is found in the secreted. It localises to the cell wall. The protein resides in the extracellular space. Its subcellular location is the apoplast. It catalyses the reaction breaks a beta-(1-&gt;4) bond in the backbone of a xyloglucan and transfers the xyloglucanyl segment on to O-4 of the non-reducing terminal glucose residue of an acceptor, which can be a xyloglucan or an oligosaccharide of xyloglucan.. In terms of biological role, catalyzes xyloglucan endohydrolysis (XEH) and/or endotransglycosylation (XET). Cleaves and religates xyloglucan polymers, an essential constituent of the primary cell wall, and thereby participates in cell wall construction of growing tissues. This Phaseolus angularis (Azuki bean) protein is Probable xyloglucan endotransglucosylase/hydrolase protein B (XTHB).